The sequence spans 297 residues: T-cell leukemia homeobox protein 1 (297 aa).

The interval 153–174 (DRFTGHPYQNRTPPKKKKPRTS) is disordered. A DNA-binding region (homeobox) is located at residues 168–227 (KKKPRTSFTRLQICELEKRFHRQKYLASAERAALAKALKMTDAQVKTWFQNRRTKWRRQT).

It is found in the nucleus. Seems to be involved in the development of cranial sensory innervation from peripheral ganglia. The protein is T-cell leukemia homeobox protein 1 (TLX1) of Gallus gallus (Chicken).